Reading from the N-terminus, the 372-residue chain is Lipoyl synthase, mitochondrial (372 aa).

Residues cysteine 106, cysteine 111, cysteine 117, cysteine 137, cysteine 141, cysteine 144, and serine 352 each contribute to the [4Fe-4S] cluster site. In terms of domain architecture, Radical SAM core spans 122 to 341 (EYGTATATIM…EKAGNELGFL (220 aa)).

This sequence belongs to the radical SAM superfamily. Lipoyl synthase family. [4Fe-4S] cluster serves as cofactor.

The protein localises to the mitochondrion. The catalysed reaction is [[Fe-S] cluster scaffold protein carrying a second [4Fe-4S](2+) cluster] + N(6)-octanoyl-L-lysyl-[protein] + 2 oxidized [2Fe-2S]-[ferredoxin] + 2 S-adenosyl-L-methionine + 4 H(+) = [[Fe-S] cluster scaffold protein] + N(6)-[(R)-dihydrolipoyl]-L-lysyl-[protein] + 4 Fe(3+) + 2 hydrogen sulfide + 2 5'-deoxyadenosine + 2 L-methionine + 2 reduced [2Fe-2S]-[ferredoxin]. Its pathway is protein modification; protein lipoylation via endogenous pathway; protein N(6)-(lipoyl)lysine from octanoyl-[acyl-carrier-protein]: step 2/2. In terms of biological role, catalyzes the radical-mediated insertion of two sulfur atoms into the C-6 and C-8 positions of the octanoyl moiety bound to the lipoyl domains of lipoate-dependent enzymes, thereby converting the octanoylated domains into lipoylated derivatives. The protein is Lipoyl synthase, mitochondrial (lias) of Xenopus laevis (African clawed frog).